A 201-amino-acid chain; its full sequence is Large ribosomal subunit protein uL4 (201 aa).

A disordered region spans residues 42–67 (GNSAQKTRSEVSGGGKKPWNQKGTGR).

This sequence belongs to the universal ribosomal protein uL4 family. In terms of assembly, part of the 50S ribosomal subunit.

Its function is as follows. One of the primary rRNA binding proteins, this protein initially binds near the 5'-end of the 23S rRNA. It is important during the early stages of 50S assembly. It makes multiple contacts with different domains of the 23S rRNA in the assembled 50S subunit and ribosome. Functionally, forms part of the polypeptide exit tunnel. The protein is Large ribosomal subunit protein uL4 of Legionella pneumophila (strain Lens).